The sequence spans 441 residues: uncharacterized protein (441 aa).

Positions 121-143 (TLSPSIVSEQQQQQQQQQQQQQQ) are enriched in low complexity. Disordered stretches follow at residues 121–146 (TLSPSIVSEQQQQQQQQQQQQQQAIS) and 371–392 (SDADTDSDSEHPTSAPSTTAPN). Residues 382-391 (PTSAPSTTAP) are compositionally biased toward polar residues.

This is an uncharacterized protein from Dictyostelium discoideum (Social amoeba).